The chain runs to 286 residues: Energy-coupling factor transporter ATP-binding protein EcfA2 (286 aa).

In terms of domain architecture, ABC transporter spans 3-246 (IRFDNVSYTY…KEKLADWHIG (244 aa)). Residue 40–47 (GQTGSGKS) participates in ATP binding.

This sequence belongs to the ABC transporter superfamily. Energy-coupling factor EcfA family. As to quaternary structure, forms a stable energy-coupling factor (ECF) transporter complex composed of 2 membrane-embedded substrate-binding proteins (S component), 2 ATP-binding proteins (A component) and 2 transmembrane proteins (T component).

The protein localises to the cell membrane. Functionally, ATP-binding (A) component of a common energy-coupling factor (ECF) ABC-transporter complex. Unlike classic ABC transporters this ECF transporter provides the energy necessary to transport a number of different substrates. In Staphylococcus aureus (strain MRSA252), this protein is Energy-coupling factor transporter ATP-binding protein EcfA2.